A 430-amino-acid chain; its full sequence is Enolase (430 aa).

Gln167 lines the (2R)-2-phosphoglycerate pocket. Glu209 serves as the catalytic Proton donor. The Mg(2+) site is built by Asp245, Glu286, and Asp313. (2R)-2-phosphoglycerate is bound by residues Lys338, Arg367, Ser368, and Lys389. The active-site Proton acceptor is the Lys338.

Belongs to the enolase family. The cofactor is Mg(2+).

Its subcellular location is the cytoplasm. It is found in the secreted. It localises to the cell surface. It catalyses the reaction (2R)-2-phosphoglycerate = phosphoenolpyruvate + H2O. It participates in carbohydrate degradation; glycolysis; pyruvate from D-glyceraldehyde 3-phosphate: step 4/5. In terms of biological role, catalyzes the reversible conversion of 2-phosphoglycerate (2-PG) into phosphoenolpyruvate (PEP). It is essential for the degradation of carbohydrates via glycolysis. In Parasynechococcus marenigrum (strain WH8102), this protein is Enolase.